The primary structure comprises 324 residues: Antihemorrhagic factor cHLP-A (324 aa).

A signal peptide spans 1-19 (MNSLVALVLLGQIIGSTLS). Cystatin fetuin-A-type domains are found at residues 21-130 (QLGP…VKCK) and 141-254 (RNCP…SDCV). Disulfide bonds link C28–C315, C85–C96, C110–C129, C143–C146, C205–C217, and C230–C253. N204 carries N-linked (GlcNAc...) asparagine glycosylation. N-linked (GlcNAc...) asparagine glycosylation occurs at N282.

Belongs to the fetuin family. In terms of assembly, homodimer. In terms of tissue distribution, expressed by the liver.

It is found in the secreted. In terms of biological role, potent inhibitor of hemorrhagic activity but also proteolytic activities. Inhibition occurs by formation of a non-covalent complex between this protein and the proteinases at their metalloproteinase domains. This is Antihemorrhagic factor cHLP-A from Gloydius brevicauda (Korean slamosa snake).